The sequence spans 316 residues: MADERGPINKSGPSSTYGATENNGESGGTRGAPATEDVIVIQDSGWYYIKFRFKEPFAEFLGTFILVAFGVGAIAQTVLSKGATGNWITIALGFGLGLALGIAVSGHYSGGHLNPAVTITLAIYRKFPWVKVPVYITAQVLGAFVAAAVIYLNYLPAIYNFAGDKRDVIGANATAGIFATYPQPFMSIGGAFFSEALGTFFLLFVILAMTDERNVPTTRIVAPITIGLTLTAIAISLGFETGFSLNAARDFGPRLFTFFIGYGVEVFTAYKFYFWIPLVAPIVGGLVAGFVYDSLLYWGEKSFLNKNVHHEHRAVA.

Residues 1–31 (MADERGPINKSGPSSTYGATENNGESGGTRG) are disordered. At 1 to 59 (MADERGPINKSGPSSTYGATENNGESGGTRGAPATEDVIVIQDSGWYYIKFRFKEPFAE) the chain is on the cytoplasmic side. The span at 11 to 24 (SGPSSTYGATENNG) shows a compositional bias: polar residues. The helical transmembrane segment at 60–80 (FLGTFILVAFGVGAIAQTVLS) threads the bilayer. The Extracellular segment spans residues 81–86 (KGATGN). A helical transmembrane segment spans residues 87–107 (WITIALGFGLGLALGIAVSGH). Topologically, residues 108-131 (YSGGHLNPAVTITLAIYRKFPWVK) are cytoplasmic. The short motif at 114-116 (NPA) is the NPA 1 element. The chain crosses the membrane as a helical span at residues 132-152 (VPVYITAQVLGAFVAAAVIYL). The Extracellular portion of the chain corresponds to 153–187 (NYLPAIYNFAGDKRDVIGANATAGIFATYPQPFMS). The N-linked (GlcNAc...) asparagine glycan is linked to Asn-172. The chain crosses the membrane as a helical span at residues 188–208 (IGGAFFSEALGTFFLLFVILA). Residues 209–219 (MTDERNVPTTR) lie on the Cytoplasmic side of the membrane. Residues 220 to 240 (IVAPITIGLTLTAIAISLGFE) traverse the membrane as a helical segment. The Extracellular segment spans residues 241–271 (TGFSLNAARDFGPRLFTFFIGYGVEVFTAYK). Residues 246–248 (NAA) carry the NPA 2 motif. A helical membrane pass occupies residues 272-292 (FYFWIPLVAPIVGGLVAGFVY). Over 293–316 (DSLLYWGEKSFLNKNVHHEHRAVA) the chain is Cytoplasmic.

The protein belongs to the MIP/aquaporin (TC 1.A.8) family.

It localises to the cell membrane. Its subcellular location is the membrane. It catalyses the reaction H2O(in) = H2O(out). It carries out the reaction glycerol(in) = glycerol(out). With respect to regulation, polyethylene glycol (PEG) stimulates whereas glycerol inhibits the aquaporin activity. Water channel required to facilitate the transport of water across membranes. Stimulates plant drought tolerance by facilitating the transport of water from the arbuscular mycorrhiza fungus to host plants. In Rhizophagus irregularis (Arbuscular mycorrhizal fungus), this protein is Aquaglyceroporin-2.